We begin with the raw amino-acid sequence, 108 residues long: MVKGSQVKPSTTELLLKAVSAKAPSGDPIHQKIGDLPFEKIVEIAIEKKPDLLAKTLKAAVKTILGSARSIGVTVDGKDPKEVTRQVDEGVYDAVLAKYEEKWEEAEG.

Belongs to the universal ribosomal protein uL11 family. As to quaternary structure, part of the ribosomal stalk of the 50S ribosomal subunit. Interacts with L10 and the large rRNA to form the base of the stalk. L10 forms an elongated spine to which L12 dimers bind in a sequential fashion forming a multimeric L10(L12)X complex.

In terms of biological role, forms part of the ribosomal stalk which helps the ribosome interact with GTP-bound translation factors. This chain is Large ribosomal subunit protein uL11 (rpl11), found in Aeropyrum pernix (strain ATCC 700893 / DSM 11879 / JCM 9820 / NBRC 100138 / K1).